Consider the following 224-residue polypeptide: UPF0758 protein Lm4b_01560 (224 aa).

Residues 102 to 224 form the MPN domain; it reads VVRCPEDAVK…YISLKEKGYF (123 aa). Zn(2+)-binding residues include histidine 173, histidine 175, and aspartate 186. The JAMM motif signature appears at 173-186; the sequence is HNHPSGDPTPSSED.

It belongs to the UPF0758 family.

The protein is UPF0758 protein Lm4b_01560 of Listeria monocytogenes serotype 4b (strain CLIP80459).